The following is a 516-amino-acid chain: Thiosulfate sulfurtransferase/rhodanese-like domain-containing protein 2 (516 aa).

Ser-269 carries the phosphoserine modification. The region spanning 301 to 396 (EQSDTILLDC…YLEEFPDGFY (96 aa)) is the Rhodanese domain. Cys-355 functions as the Cysteine persulfide intermediate in the catalytic mechanism. The segment at 490–516 (RELLQHVRQPVSPEPGPDAEEDGPVLV) is disordered. Over residues 506–516 (PDAEEDGPVLV) the composition is skewed to acidic residues.

The protein is Thiosulfate sulfurtransferase/rhodanese-like domain-containing protein 2 (TSTD2) of Pongo abelii (Sumatran orangutan).